We begin with the raw amino-acid sequence, 1029 residues long: Probable E3 ubiquitin protein ligase C167.07c (1029 aa).

The IQ domain maps to Ala46–Ile75. In terms of domain architecture, HECT spans Phe692 to Ser1029. Cys997 acts as the Glycyl thioester intermediate in catalysis.

It localises to the cytoplasm. It is found in the nucleus. It carries out the reaction S-ubiquitinyl-[E2 ubiquitin-conjugating enzyme]-L-cysteine + [acceptor protein]-L-lysine = [E2 ubiquitin-conjugating enzyme]-L-cysteine + N(6)-ubiquitinyl-[acceptor protein]-L-lysine.. Its function is as follows. Probable E3 ubiquitin-protein ligase which mediates ubiquitination and subsequent proteasomal degradation of target proteins. In Schizosaccharomyces pombe (strain 972 / ATCC 24843) (Fission yeast), this protein is Probable E3 ubiquitin protein ligase C167.07c.